We begin with the raw amino-acid sequence, 509 residues long: Scavenger receptor class B member 1 (509 aa).

Residues 1-11 (MGSRSRARQVA) are Cytoplasmic-facing. The chain crosses the membrane as a helical span at residues 12–32 (AALGFVGLLLAALGAVMIVMV). Residues 33–439 (PSIIKQQVLK…FYTQLVLMPK (407 aa)) lie on the Extracellular side of the membrane. 8 N-linked (GlcNAc...) asparagine glycosylation sites follow: N102, N108, N173, N212, N255, N310, N330, and N383. A disulfide bridge links C251 with C384. Residues 440-460 (VLHYAQYVLLALGCVLLFIPI) traverse the membrane as a helical segment. At 461–509 (VYQIRSQEKCYLFWSSSKKGSKDKEAIQAYSESLMTPAPKGTVLQEARL) the chain is on the cytoplasmic side.

It belongs to the CD36 family. As to quaternary structure, the C-terminal region binds to PDZK1. Post-translationally, N-glycosylated. The six cysteines of the extracellular domain are all involved in intramolecular disulfide bonds.

The protein resides in the cell membrane. The protein localises to the membrane. Its subcellular location is the caveola. In terms of biological role, receptor for different ligands such as phospholipids, cholesterol ester, lipoproteins, phosphatidylserine and apoptotic cells. Receptor for HDL, mediating selective uptake of cholesteryl ether and HDL-dependent cholesterol efflux. Also facilitates the flux of free and esterified cholesterol between the cell surface and apoB-containing lipoproteins and modified lipoproteins, although less efficiently than HDL. May be involved in the phagocytosis of apoptotic cells, via its phosphatidylserine binding activity. This chain is Scavenger receptor class B member 1 (SCARB1), found in Sus scrofa (Pig).